Here is a 36-residue protein sequence, read N- to C-terminus: Phosphoglycerate kinase, chloroplastic (36 aa).

The (2R)-3-phosphoglycerate site is built by A22, D23, and N25.

This sequence belongs to the phosphoglycerate kinase family. In terms of assembly, monomer. It depends on Mg(2+) as a cofactor.

The protein resides in the plastid. It localises to the chloroplast. The catalysed reaction is (2R)-3-phosphoglycerate + ATP = (2R)-3-phospho-glyceroyl phosphate + ADP. It functions in the pathway carbohydrate biosynthesis; Calvin cycle. The sequence is that of Phosphoglycerate kinase, chloroplastic from Scenedesmus fuscus (Green alga).